We begin with the raw amino-acid sequence, 437 residues long: Vasoactive intestinal polypeptide receptor 2 (437 aa).

The signal sequence occupies residues 1-22 (MRASVVLTCYCWLLVRVSSIHP). The Extracellular segment spans residues 23–123 (ECRFHLEIQE…EDESKISFYI (101 aa)). 3 disulfide bridges follow: C37–C60, C51–C92, and C74–C108. N-linked (GlcNAc...) asparagine glycans are attached at residues N57, N87, and N91. Residues 124–149 (LVKAIYTLGYSVSLMSLTTGSIIICL) form a helical membrane-spanning segment. Residues 150-157 (FRKLHCTR) are Cytoplasmic-facing. A helical transmembrane segment spans residues 158-179 (NYIHLNLFLSFMLRAISVLVKD). Residues 180-202 (SVLYSSSGLLRCHDQPASWVGCK) are Extracellular-facing. C201 and C270 are disulfide-bonded. The chain crosses the membrane as a helical span at residues 203–227 (LSLVFFQYCIMANFYWLLVEGLYLH). Residues 228-238 (TLLVAILPPSR) are Cytoplasmic-facing. The helical transmembrane segment at 239-260 (CFLAYLLIGWGIPSVCIGAWTA) threads the bilayer. Over 261–279 (TRLSLEDTGCWDTNDHSIP) the chain is Extracellular. Residues 280–303 (WWVIRMPILISIVVNFALFISIVR) form a helical membrane-spanning segment. The Cytoplasmic segment spans residues 304 to 324 (ILLQKLTSPDVGGNDQSQYKR). A helical membrane pass occupies residues 325-345 (LAKSTLLLIPLFGVHYMVFAA). Residues 346-353 (FPIGISST) are Extracellular-facing. Residues 354–377 (YQILFELCVGSFQGLVVAVLYCFL) traverse the membrane as a helical segment. Topologically, residues 378 to 437 (NSEVQCELKRRWRGLCLTQAGSRDYRLHSWSMSRNGSESALQIHRGSRTQSFLQSETSVI) are cytoplasmic.

The protein belongs to the G-protein coupled receptor 2 family. Interacts with ADCYAP1/PACAP (via N-terminal extracellular domain); activated by PACAP27 and CAPAC38 neuropeptides. Interacts with VIP; the interaction results in VIPR1 activation. Expressed at high levels in the MIN6 cells, at moderate levels in pancreatic islets, insulin-secreting cells, lung, brain, stomach, and colon, and at low levels in the heart.

It is found in the cell membrane. Functionally, g protein-coupled receptor activated by the neuropeptides vasoactive intestinal peptide (VIP) and pituitary adenylate cyclase-activating polypeptide (ADCYAP1/PACAP). Binds VIP and both PACAP27 and PACAP38 bioactive peptides with the order of ligand affinity of VIP = PACAP38 &gt; PACAP27. Ligand binding causes a conformation change that triggers signaling via guanine nucleotide-binding proteins (G proteins) and modulates the activity of downstream effectors. Activates cAMP-dependent pathway. May be coupled to phospholipase C. In Mus musculus (Mouse), this protein is Vasoactive intestinal polypeptide receptor 2.